A 311-amino-acid chain; its full sequence is tRNA dimethylallyltransferase (311 aa).

8 to 15 contributes to the ATP binding site; that stretch reads GPTGVGKS. Substrate is bound at residue 10 to 15; the sequence is TGVGKS.

This sequence belongs to the IPP transferase family. In terms of assembly, monomer. Requires Mg(2+) as cofactor.

The enzyme catalyses adenosine(37) in tRNA + dimethylallyl diphosphate = N(6)-dimethylallyladenosine(37) in tRNA + diphosphate. Functionally, catalyzes the transfer of a dimethylallyl group onto the adenine at position 37 in tRNAs that read codons beginning with uridine, leading to the formation of N6-(dimethylallyl)adenosine (i(6)A). This is tRNA dimethylallyltransferase from Mycobacterium leprae (strain Br4923).